Here is a 384-residue protein sequence, read N- to C-terminus: Isoafricanol synthase (384 aa).

Asp-95, Asn-245, Ser-249, and Glu-253 together coordinate Mg(2+).

This sequence belongs to the terpene synthase family. It depends on Mg(2+) as a cofactor.

The catalysed reaction is (2E,6E)-farnesyl diphosphate + H2O = (+)-isoafricanol + diphosphate. Its function is as follows. Catalyzes the cyclization of farnesyl diphosphate (FPP) to isoafricanol. The protein is Isoafricanol synthase of Streptomyces violaceusniger (strain Tu 4113).